Reading from the N-terminus, the 564-residue chain is Diacylglycerol kinase epsilon (564 aa).

The chain crosses the membrane as a helical span at residues 20 to 40; that stretch reads LVLWTLCSVLLPVFITLWCSL. 2 consecutive Phorbol-ester/DAG-type zinc fingers follow at residues 57–106 and 121–174; these read KHCW…RFPC and PHHW…SEKC. The DAGKc domain occupies 212 to 353; the sequence is KQWTPLIILA…LDRWKVQVTN (142 aa).

It belongs to the eukaryotic diacylglycerol kinase family. Highly expressed in brain and heart. In brain, highly expressed in Purkinje cells of the cerebellum, pyramidal cells of the hippocampus, mitral cells of the olfactory bulb, and neurons of the substantia nigra. Lower expression in neurons of the thalamus, superior olive, and lateral reticular nucleus is also detected. Expressed in platelets.

It localises to the membrane. The protein localises to the cytoplasm. The catalysed reaction is a 1,2-diacyl-sn-glycerol + ATP = a 1,2-diacyl-sn-glycero-3-phosphate + ADP + H(+). It catalyses the reaction 1-hexadecanoyl-2-(5Z,8Z,11Z,14Z-eicosatetraenoyl)-sn-glycerol + ATP = 1-hexadecanoyl-2-(5Z,8Z,11Z,14Z-eicosatetraenoyl)-sn-glycero-3-phosphate + ADP + H(+). The enzyme catalyses 1-octadecanoyl-2-(5Z,8Z,11Z,14Z-eicosatetraenoyl)-sn-glycerol + ATP = 1-octadecanoyl-2-(5Z,8Z,11Z,14Z-eicosatetraenoyl)-sn-glycero-3-phosphate + ADP + H(+). It carries out the reaction 1-eicosanoyl-2-(5Z,8Z,11Z,14Z)-eicosatetraenoyl-sn-glycerol + ATP = 1-eicosanoyl-2-(5Z,8Z,11Z,14Z)-eicosatetraenoyl-sn-glycero-3-phosphate + ADP + H(+). The catalysed reaction is 1,2-di-(5Z,8Z,11Z,14Z)-eicosatetraenoyl-sn-glycerol + ATP = 1,2-di-(5Z,8Z,11Z,14Z)-eicosatetraenoyl-sn-glycero-3-phosphate + ADP + H(+). It catalyses the reaction 1-octadecanoyl-2-(9Z,12Z)-octadecadienoyl-sn-glycerol + ATP = 1-octadecanoyl-2-(9Z,12Z-octadecadienoyl)-sn-glycero-3-phosphate + ADP + H(+). The enzyme catalyses 1,2-di-(9Z,12Z-octadecadienoyl)-sn-glycerol + ATP = 1,2-di-(9Z,12Z-octadecadienoyl)-sn-glycero-3-phosphate + ADP + H(+). It carries out the reaction 1,2-di-(9Z-octadecenoyl)-sn-glycerol + ATP = 1,2-di-(9Z-octadecenoyl)-sn-glycero-3-phosphate + ADP + H(+). Its pathway is lipid metabolism; glycerolipid metabolism. Functionally, membrane-bound diacylglycerol kinase that converts diacylglycerol/DAG into phosphatidic acid/phosphatidate/PA and regulates the respective levels of these two bioactive lipids. Thereby, acts as a central switch between the signaling pathways activated by these second messengers with different cellular targets and opposite effects in numerous biological processes. Also plays an important role in the biosynthesis of complex lipids. Displays specificity for diacylglycerol substrates with an arachidonoyl acyl chain at the sn-2 position, with the highest activity toward 1-octadecanoyl-2-(5Z,8Z,11Z,14Z-eicosatetraenoyl)-sn-glycerol the main diacylglycerol intermediate within the phosphatidylinositol turnover cycle. Can also phosphorylate diacylglycerol substrates with a linoleoyl acyl chain at the sn-2 position but much less efficiently. This is Diacylglycerol kinase epsilon (Dgke) from Mus musculus (Mouse).